A 119-amino-acid polypeptide reads, in one-letter code: Large ribosomal subunit protein bL19 (119 aa).

Belongs to the bacterial ribosomal protein bL19 family.

In terms of biological role, this protein is located at the 30S-50S ribosomal subunit interface and may play a role in the structure and function of the aminoacyl-tRNA binding site. The protein is Large ribosomal subunit protein bL19 of Borreliella afzelii (strain PKo) (Borrelia afzelii).